The primary structure comprises 2073 residues: Fatty acid synthase subunit beta (2073 aa).

The interval 1-459 (MVEAEQVHQS…VYSTDDAGDL (459 aa)) is acetyltransferase. S270 acts as the For acetyltransferase activity in catalysis. Positions 470–858 (ALAVMITEKV…TRGIMFWKEL (389 aa)) are enoyl reductase. At S1122 the chain carries Phosphoserine. The segment at 1155 to 1644 (GPEYTWFRAI…LPNTELITKL (490 aa)) is dehydratase. H1361 (for dehydratase activity) is an active-site residue. In terms of domain architecture, MaoC-like spans 1558–1667 (PVFVTPPTNS…VEVLNQETSE (110 aa)). The segment at 1645–2073 (SHTGMINGRK…LQNWDEYESS (429 aa)) is malonyl/palmitoyl transferase. S1828 functions as the For malonyltransferase activity in the catalytic mechanism. A Phosphoserine modification is found at S2073.

It belongs to the fungal fatty acid synthetase subunit beta family. As to quaternary structure, [Alpha(6)beta(6)] hexamers of two multifunctional subunits (alpha and beta).

The catalysed reaction is acetyl-CoA + n malonyl-CoA + 2n NADPH + 4n H(+) = a long-chain-acyl-CoA + n CoA + n CO2 + 2n NADP(+).. The enzyme catalyses holo-[ACP] + acetyl-CoA = acetyl-[ACP] + CoA. It catalyses the reaction holo-[ACP] + malonyl-CoA = malonyl-[ACP] + CoA. It carries out the reaction a (3R)-hydroxyacyl-[ACP] = a (2E)-enoyl-[ACP] + H2O. The catalysed reaction is a 2,3-saturated acyl-[ACP] + NAD(+) = a (2E)-enoyl-[ACP] + NADH + H(+). The enzyme catalyses (9Z)-octadecenoyl-[ACP] + H2O = (9Z)-octadecenoate + holo-[ACP] + H(+). Its function is as follows. Fatty acid synthetase catalyzes the formation of long-chain fatty acids from acetyl-CoA, malonyl-CoA and NADPH. The beta subunit contains domains for: [acyl-carrier-protein] acetyltransferase and malonyltransferase, S-acyl fatty acid synthase thioesterase, enoyl-[acyl-carrier-protein] reductase, and 3-hydroxypalmitoyl-[acyl-carrier-protein] dehydratase. This chain is Fatty acid synthase subunit beta (fas1), found in Schizosaccharomyces pombe (strain 972 / ATCC 24843) (Fission yeast).